Consider the following 66-residue polypeptide: Large ribosomal subunit protein uL29 (66 aa).

It belongs to the universal ribosomal protein uL29 family.

The sequence is that of Large ribosomal subunit protein uL29 from Fervidobacterium nodosum (strain ATCC 35602 / DSM 5306 / Rt17-B1).